The chain runs to 508 residues: Maturase K (508 aa).

Belongs to the intron maturase 2 family. MatK subfamily.

The protein resides in the plastid. Its subcellular location is the chloroplast. Functionally, usually encoded in the trnK tRNA gene intron. Probably assists in splicing its own and other chloroplast group II introns. This Abrus precatorius (Indian licorice) protein is Maturase K.